Consider the following 188-residue polypeptide: Protein YecM (188 aa).

The protein to H.influenzae HI_1582/HI_1581.

The protein is Protein YecM (yecM) of Escherichia coli (strain K12).